The chain runs to 290 residues: MDKIIKSIAQSGAFRAYVLDSTETVALAQEKHNTLSSSTVALGRTLIANQILAANQKGDSKITVKVIGDSSFGHIISVADTKGHVKGYIQNTGVDIKKTATGEVLVGPFMGNGHFVTIIDYGTGNPYTSTTPLITGEIGEDFAYYLTESEQTPSAIGLNVLLDENDKVKVAGGFMVQVLPGASEEEIARYEKRLQEMPAISHLLASKNHVDALLEAICGDEPYKRLSEEPLSFQCDCSRERFEAALMTLPKADLQAMIDEDKGAEIVCQFCGTKYQFNESDLEAIINDKA.

Disulfide bonds link C235–C237 and C268–C271.

The protein belongs to the HSP33 family. In terms of processing, under oxidizing conditions two disulfide bonds are formed involving the reactive cysteines. Under reducing conditions zinc is bound to the reactive cysteines and the protein is inactive.

It localises to the cytoplasm. In terms of biological role, redox regulated molecular chaperone. Protects both thermally unfolding and oxidatively damaged proteins from irreversible aggregation. Plays an important role in the bacterial defense system toward oxidative stress. This chain is 33 kDa chaperonin, found in Streptococcus pyogenes serotype M6 (strain ATCC BAA-946 / MGAS10394).